Reading from the N-terminus, the 275-residue chain is 3-methyl-2-oxobutanoate hydroxymethyltransferase (275 aa).

Mg(2+)-binding residues include aspartate 51 and aspartate 90. 3-methyl-2-oxobutanoate contacts are provided by residues 51–52 (DS), aspartate 90, and lysine 120. Position 122 (glutamate 122) interacts with Mg(2+). Catalysis depends on glutamate 189, which acts as the Proton acceptor.

It belongs to the PanB family. As to quaternary structure, homodecamer; pentamer of dimers. Requires Mg(2+) as cofactor.

It localises to the cytoplasm. It catalyses the reaction 3-methyl-2-oxobutanoate + (6R)-5,10-methylene-5,6,7,8-tetrahydrofolate + H2O = 2-dehydropantoate + (6S)-5,6,7,8-tetrahydrofolate. It participates in cofactor biosynthesis; (R)-pantothenate biosynthesis; (R)-pantoate from 3-methyl-2-oxobutanoate: step 1/2. In terms of biological role, catalyzes the reversible reaction in which hydroxymethyl group from 5,10-methylenetetrahydrofolate is transferred onto alpha-ketoisovalerate to form ketopantoate. The protein is 3-methyl-2-oxobutanoate hydroxymethyltransferase of Phenylobacterium zucineum (strain HLK1).